Here is a 92-residue protein sequence, read N- to C-terminus: Elongation factor 1-beta (92 aa).

The protein belongs to the EF-1-beta/EF-1-delta family.

Promotes the exchange of GDP for GTP in EF-1-alpha/GDP, thus allowing the regeneration of EF-1-alpha/GTP that could then be used to form the ternary complex EF-1-alpha/GTP/AAtRNA. The sequence is that of Elongation factor 1-beta from Pyrobaculum arsenaticum (strain DSM 13514 / JCM 11321 / PZ6).